Reading from the N-terminus, the 297-residue chain is 33 kDa chaperonin (297 aa).

Intrachain disulfides connect Cys232/Cys234 and Cys266/Cys269.

Belongs to the HSP33 family. Under oxidizing conditions two disulfide bonds are formed involving the reactive cysteines. Under reducing conditions zinc is bound to the reactive cysteines and the protein is inactive.

Its subcellular location is the cytoplasm. In terms of biological role, redox regulated molecular chaperone. Protects both thermally unfolding and oxidatively damaged proteins from irreversible aggregation. Plays an important role in the bacterial defense system toward oxidative stress. The sequence is that of 33 kDa chaperonin from Pseudomonas paraeruginosa (strain DSM 24068 / PA7) (Pseudomonas aeruginosa (strain PA7)).